The following is a 515-amino-acid chain: Maturase K (515 aa).

Belongs to the intron maturase 2 family. MatK subfamily.

The protein resides in the plastid. It is found in the chloroplast. Functionally, usually encoded in the trnK tRNA gene intron. Probably assists in splicing its own and other chloroplast group II introns. This Pinus contorta (Shore pine) protein is Maturase K.